The sequence spans 294 residues: MKNNIVIITGITASGKSELCDNLIEKYGNISIINCDSKQVYEEIPIITAQPPKQEVFYKLYGYVSAKENYSVGLWLEDLEKEVNHALENAQIPIITGGSGLYISSLIKGLSSMPQISQKVRKNVSELRKNLSKEEFYKLALSKDPRIQGKVFMNDSHRLSRALEVITETGKSIFVWQENRQPPLFNNFKIYTILPKREDVYRKINSRFITMIENGAIDEVKKLLSMNLAPHLPAMKAHGVPEIIKYLKGEITLDEAIQIAQTNTRHYAKRQYTWFKKQFLNAEVIDCANKLKIF.

10-17 (GITASGKS) serves as a coordination point for ATP. 12 to 17 (TASGKS) lines the substrate pocket. The interaction with substrate tRNA stretch occupies residues 36–39 (DSKQ).

It belongs to the IPP transferase family. As to quaternary structure, monomer. The cofactor is Mg(2+).

It carries out the reaction adenosine(37) in tRNA + dimethylallyl diphosphate = N(6)-dimethylallyladenosine(37) in tRNA + diphosphate. Its function is as follows. Catalyzes the transfer of a dimethylallyl group onto the adenine at position 37 in tRNAs that read codons beginning with uridine, leading to the formation of N6-(dimethylallyl)adenosine (i(6)A). This is tRNA dimethylallyltransferase from Wolbachia sp. subsp. Drosophila simulans (strain wRi).